The primary structure comprises 210 residues: Somatotropin-1 (210 aa).

The signal sequence occupies residues 1 to 22 (MGQVFLLMPVLLASCFLSQGAA). Zn(2+) is bound at residue H38. C71 and C183 are oxidised to a cystine. E192 is a binding site for Zn(2+). C200 and C208 form a disulfide bridge.

It belongs to the somatotropin/prolactin family.

The protein resides in the secreted. Growth hormone plays an important role in growth control and is involved in the regulation of several anabolic processes. Implicated as an osmoregulatory substance important for seawater adaptation. The protein is Somatotropin-1 (gh1) of Oncorhynchus nerka (Sockeye salmon).